We begin with the raw amino-acid sequence, 60 residues long: Short neurotoxin 1 (60 aa).

Cystine bridges form between Cys-3–Cys-22, Cys-17–Cys-39, Cys-41–Cys-52, and Cys-53–Cys-58.

It belongs to the three-finger toxin family. Short-chain subfamily. Type I alpha-neurotoxin sub-subfamily. As to expression, expressed by the venom gland.

The protein localises to the secreted. Functionally, binds to muscle nicotinic acetylcholine receptor (nAChR) and inhibit acetylcholine from binding to the receptor, thereby impairing neuromuscular transmission. The recombinant protein also barely blocks voltage-gated potassium channel Kv1.3/KCNA3 (2.71% inhibition at 60 nM of toxin). The sequence is that of Short neurotoxin 1 from Hydrophis lapemoides (Persian gulf sea snake).